The following is a 78-amino-acid chain: Large ribosomal subunit protein bL28 (78 aa).

Residues 1–25 are disordered; that stretch reads MSRVCQVTGKRPAVGNNRSHAKNAT.

It belongs to the bacterial ribosomal protein bL28 family.

The polypeptide is Large ribosomal subunit protein bL28 (Aliivibrio fischeri (strain ATCC 700601 / ES114) (Vibrio fischeri)).